A 514-amino-acid chain; its full sequence is Efflux pump aflT (514 aa).

A run of 10 helical transmembrane segments spans residues 13–33, 61–81, 85–105, 116–136, 146–166, 174–194, 218–238, 247–267, 289–309, and 321–341; these read ISGM…FCVA, SAYL…YALF, WVFL…GVAP, IAGV…AHIV, GLLG…GGAF, WCFY…LFLL, GTIV…WGGV, IIAL…IQVL, VFVF…PIWF, and GIDS…SGAV. A glycan (N-linked (GlcNAc...) asparagine) is linked at N343. A run of 4 helical transmembrane segments spans residues 351–371, 378–398, 411–431, and 485–505; these read WFIV…LFTV, WIGF…QGAV, IGTA…TSVA, and LDVF…AVGI.

Belongs to the major facilitator superfamily. TCR/Tet family.

It localises to the cell membrane. Its function is as follows. Efflux pump; part of the gene cluster that mediates the biosynthesis of aflatoxins. This chain is Efflux pump aflT, found in Aspergillus parasiticus (strain ATCC 56775 / NRRL 5862 / SRRC 143 / SU-1).